Here is a 332-residue protein sequence, read N- to C-terminus: uncharacterized protein (332 aa).

The tract at residues 159–256 (PLEISGRGGN…PRPHPWGPGP (98 aa)) is disordered. Positions 201–231 (RPPSPRPPSPRPPHPRPPSPRPPHPRPPSPR) are enriched in pro residues.

It is found in the virion. This is an uncharacterized protein from Acanthamoeba polyphaga (Amoeba).